The following is a 479-amino-acid chain: Solute carrier family 7 member 13 (479 aa).

The Cytoplasmic segment spans residues 1 to 14; sequence MAMDIEKKIYLKRQ. Residues 15–35 form a helical membrane-spanning segment; that stretch reads LGYFWGTNFLIINIIGAGIFV. The Extracellular segment spans residues 36–47; sequence SPKGVLQYSSMN. A helical membrane pass occupies residues 48–68; the sequence is VGVSLCVWVFCAVLSMTSTLC. Topologically, residues 69-89 are cytoplasmic; that stretch reads AAEIGITFPYTVAHYYFLKRC. Residues 90 to 110 form a helical membrane-spanning segment; that stretch reads FGPFVAFLRLWTSLFTGPGVL. At 111 to 129 the chain is on the extracellular side; sequence ASQALLLAEYGIQPFYPSC. The helical transmembrane segment at 130–150 threads the bilayer; the sequence is SAPAVPKKCLALAMLWIVGIL. Residues 151–165 lie on the Cytoplasmic side of the membrane; the sequence is NSRGVKELSWLQTVS. A helical membrane pass occupies residues 166 to 186; that stretch reads MVLKMGILSFISLSGLFLLVT. The Extracellular segment spans residues 187–208; it reads GRKENVRRLQNAFDAEFPEVSR. Residues 209–229 form a helical membrane-spanning segment; sequence LIEAIFQGYFAFSGGGSFTYV. Residues 230-242 are Cytoplasmic-facing; that stretch reads AGELKEPSKTIPR. The helical transmembrane segment at 243 to 263 threads the bilayer; that stretch reads CIFTALPLVTVVYLLANLSYL. Over 264 to 289 the chain is Extracellular; the sequence is TVLSPQELLSSDAVALTWTDRVIPQL. The helical transmembrane segment at 290 to 310 threads the bilayer; the sequence is TWSVPFAISASLFSNLVTSVF. Topologically, residues 311 to 338 are cytoplasmic; the sequence is ETSRTSYIASRNGQLPLLCSTLNVHSSP. Residues 339-359 traverse the membrane as a helical segment; sequence FIAVLLDVSMGSIAIVLTNLI. Position 360 (E360) is a topological domain, extracellular. A helical membrane pass occupies residues 361–381; that stretch reads LINYLFFVFSIWTVLSVIGIL. Topologically, residues 382–396 are cytoplasmic; sequence KLRYQEPNLHRPYKV. Residues 397–417 traverse the membrane as a helical segment; it reads FSPFLFITAAISLSMVLIPLI. Residues 418–423 are Extracellular-facing; that stretch reads KSPKMQ. Residues 424–444 traverse the membrane as a helical segment; it reads YIYVFLFFLGGLLFYVPLIHF. The Cytoplasmic segment spans residues 445-479; sequence KLKLIWFQKLTCYLQLLFNICIPDVSDEHVAEEES.

It belongs to the amino acid-polyamine-organocation (APC) superfamily. In terms of assembly, disulfide-linked heterodimer composed of the catalytic light subunit SLC7A13 and the heavy subunit SLC3A1.

It is found in the apical cell membrane. It catalyses the reaction L-cystine(out) + L-aspartate(in) = L-cystine(in) + L-aspartate(out). It carries out the reaction L-cystine(out) = L-cystine(in). The enzyme catalyses L-aspartate(in) + L-glutamate(out) = L-aspartate(out) + L-glutamate(in). The catalysed reaction is L-aspartate(in) + L-glutamine(out) = L-aspartate(out) + L-glutamine(in). It catalyses the reaction L-aspartate(in) + L-methionine(out) = L-aspartate(out) + L-methionine(in). It carries out the reaction L-leucine(out) + L-aspartate(in) = L-leucine(in) + L-aspartate(out). The enzyme catalyses L-valine(out) + L-aspartate(in) = L-valine(in) + L-aspartate(out). The catalysed reaction is L-aspartate(in) + L-phenylalanine(out) = L-aspartate(out) + L-phenylalanine(in). It catalyses the reaction L-tyrosine(out) + L-aspartate(in) = L-tyrosine(in) + L-aspartate(out). It carries out the reaction L-tryptophan(out) + L-aspartate(in) = L-tryptophan(in) + L-aspartate(out). Associates with SLC3A1/rBAT to form a functional heterodimeric complex that transports anionic and neutral amino acids across the apical plasma membrane of renal epithelium. Preferentially mediates exchange transport, but can also operate via facilitated diffusion. May act as a major transporter for L-cystine in late proximal tubules, ensuring its reabsorption from the luminal fluid in exchange for cytosolic L-glutamate or L-aspartate. This Rattus norvegicus (Rat) protein is Solute carrier family 7 member 13 (Slc7a13).